Here is a 291-residue protein sequence, read N- to C-terminus: 4-diphosphocytidyl-2-C-methyl-D-erythritol kinase (291 aa).

The active site involves Lys-10. Residue 94–104 (PVSAGLAGGSS) participates in ATP binding. Asp-136 is a catalytic residue.

The protein belongs to the GHMP kinase family. IspE subfamily.

It carries out the reaction 4-CDP-2-C-methyl-D-erythritol + ATP = 4-CDP-2-C-methyl-D-erythritol 2-phosphate + ADP + H(+). It functions in the pathway isoprenoid biosynthesis; isopentenyl diphosphate biosynthesis via DXP pathway; isopentenyl diphosphate from 1-deoxy-D-xylulose 5-phosphate: step 3/6. Its function is as follows. Catalyzes the phosphorylation of the position 2 hydroxy group of 4-diphosphocytidyl-2C-methyl-D-erythritol. The polypeptide is 4-diphosphocytidyl-2-C-methyl-D-erythritol kinase (Listeria welshimeri serovar 6b (strain ATCC 35897 / DSM 20650 / CCUG 15529 / CIP 8149 / NCTC 11857 / SLCC 5334 / V8)).